The sequence spans 219 residues: Ras-related protein Rab-32A (219 aa).

Residue 22-29 (GDIGTGKT) coordinates GTP. An Effector region motif is present at residues 44–52 (YKSTIGVDF). Residues 71-75 (DIAGQ) and 134-137 (NKCD) each bind GTP. Residues 192-219 (NQPIEGTIQPGDLNKQPQPTSTGPSCCK) form a disordered region. Residues 206–219 (KQPQPTSTGPSCCK) are compositionally biased toward polar residues. S-geranylgeranyl cysteine attachment occurs at residues Cys-217 and Cys-218.

Belongs to the small GTPase superfamily. Rab family.

The protein is Ras-related protein Rab-32A (rab32A) of Dictyostelium discoideum (Social amoeba).